Consider the following 161-residue polypeptide: Cyclic pyranopterin monophosphate synthase (161 aa).

Residues 78 to 80 (LCH) and 116 to 117 (ME) each bind substrate. Residue Asp131 is part of the active site.

Belongs to the MoaC family. Homohexamer; trimer of dimers.

It catalyses the reaction (8S)-3',8-cyclo-7,8-dihydroguanosine 5'-triphosphate = cyclic pyranopterin phosphate + diphosphate. It participates in cofactor biosynthesis; molybdopterin biosynthesis. Functionally, catalyzes the conversion of (8S)-3',8-cyclo-7,8-dihydroguanosine 5'-triphosphate to cyclic pyranopterin monophosphate (cPMP). In Bordetella pertussis (strain Tohama I / ATCC BAA-589 / NCTC 13251), this protein is Cyclic pyranopterin monophosphate synthase.